We begin with the raw amino-acid sequence, 839 residues long: Taste receptor type 1 member 2 (839 aa).

The first 19 residues, 1–19 (MGPRAKTISSLFFLLWVLA), serve as a signal peptide directing secretion. At 20–566 (EPAENSDFYL…VFLEWHEAPT (547 aa)) the chain is on the extracellular side. Asn84, Asn248, Asn292, Asn312, Asn368, Asn428, Asn487, and Asn527 each carry an N-linked (GlcNAc...) asparagine glycan. Residues 567–587 (IAVALLAALGFLSTLAILVIF) form a helical membrane-spanning segment. The Cytoplasmic segment spans residues 588 to 602 (WRHFQTPIVRSAGGP). Residues 603–623 (MCFLMLTLLLVAYMVVPVYVG) traverse the membrane as a helical segment. The Extracellular segment spans residues 624 to 635 (PPKVSTCLCRQA). Residues 636 to 656 (LFPLCFTICISCIAVRSFQIV) traverse the membrane as a helical segment. Residues 657-681 (CAFKMASRFPRAYSYWVRYQGPYVS) are Cytoplasmic-facing. A helical transmembrane segment spans residues 682–702 (MAFITVLKMVIVVIGMLATGL). The Extracellular portion of the chain corresponds to 703-727 (SPTTRTDPDDPKITIVSCNPNYRNS). A helical transmembrane segment spans residues 728–748 (LLFNTSLDLLLSVVGFSFAYM). Topologically, residues 749-760 (GKELPTNYNEAK) are cytoplasmic. The chain crosses the membrane as a helical span at residues 761-781 (FITLSMTFYFTSSVSLCTFMS). Residues 782 to 784 (AYS) are Extracellular-facing. Residues 785 to 805 (GVLVTIVDLLVTVLNLLAISL) form a helical membrane-spanning segment. Over 806-839 (GYFGPKCYMILFYPERNTPAYFNSMIQGYTMRRD) the chain is Cytoplasmic.

Belongs to the G-protein coupled receptor 3 family. TAS1R subfamily. In terms of assembly, forms heterodimers with TAS1R3.

The protein resides in the cell membrane. In terms of biological role, putative taste receptor. TAS1R2/TAS1R3 recognizes diverse natural and synthetic sweeteners. The chain is Taste receptor type 1 member 2 (TAS1R2) from Homo sapiens (Human).